The chain runs to 456 residues: Molybdate transporter 1 (456 aa).

The next 9 membrane-spanning stretches (helical) occupy residues 67–87 (LIFT…PMPV), 110–130 (IMAA…SGLM), 133–153 (VFNI…GLAF), 177–197 (PWLG…IVLV), 225–245 (VIAN…LAFI), 309–329 (AASV…FGAM), 354–374 (LLGV…VGIL), 377–397 (FPVG…AMAA), and 417–437 (LGSN…VLWM).

It belongs to the SLC26A/SulP transporter (TC 2.A.53) family. As to expression, strongly expressed in roots. Detected in the vascular tissues of hypocotyls, in petioles and vascular tissues of cotyledons and leaves, in mesophyll cells, stamen, sepals and siliques.

Its subcellular location is the cell membrane. The protein localises to the endomembrane system. The protein resides in the mitochondrion membrane. Its activity is regulated as follows. Not inhibited by sulfate. Functionally, high affinity molybdate transporter. Unable to transport sulfate. This Arabidopsis thaliana (Mouse-ear cress) protein is Molybdate transporter 1 (MOT1).